The primary structure comprises 307 residues: Beta-lactamase (307 aa).

Positions 1–34 (MRNRGFGRRELLVAMAMLVSVTGCARHASGARPA) form a signal peptide, tat-type signal. The Acyl-ester intermediate role is filled by S84. Position 142 (S142) interacts with substrate. The active-site Proton acceptor is E182. Position 251–253 (251–253 (TGT)) interacts with substrate.

This sequence belongs to the class-A beta-lactamase family. In terms of assembly, monomer. Exported by the Tat system. The position of the signal peptide cleavage has not been experimentally proven.

Its subcellular location is the periplasm. It localises to the secreted. It carries out the reaction a beta-lactam + H2O = a substituted beta-amino acid. Is inhibited by clavulanate. Its function is as follows. Extended spectrum beta-lactamase (ESBL) that inactivates beta-lactam antibiotics by hydrolyzing the amide group of the beta-lactam ring. Displays high levels of penicillinase and cephalosporinase activity as well as measurable activity with carbapenems, including imipenem and meropenem. Plays a primary role in the intrinsic resistance of mycobacteria to beta-lactam antibiotics. This chain is Beta-lactamase (blaC), found in Mycobacterium bovis (strain ATCC BAA-935 / AF2122/97).